We begin with the raw amino-acid sequence, 89 residues long: Small ribosomal subunit protein uS15 (89 aa).

This sequence belongs to the universal ribosomal protein uS15 family. In terms of assembly, part of the 30S ribosomal subunit. Forms a bridge to the 50S subunit in the 70S ribosome, contacting the 23S rRNA.

Functionally, one of the primary rRNA binding proteins, it binds directly to 16S rRNA where it helps nucleate assembly of the platform of the 30S subunit by binding and bridging several RNA helices of the 16S rRNA. Its function is as follows. Forms an intersubunit bridge (bridge B4) with the 23S rRNA of the 50S subunit in the ribosome. The polypeptide is Small ribosomal subunit protein uS15 (Chloroherpeton thalassium (strain ATCC 35110 / GB-78)).